The following is a 455-amino-acid chain: Tyramine receptor Ser-2 (455 aa).

The Extracellular segment spans residues 1–60 (MFRNYTDSVQEMVLRAIDSIRDSVINASSAVSTTTLPPLDIPMTSMKPPSIIPTVELVLG). Asparagine 4 and asparagine 26 each carry an N-linked (GlcNAc...) asparagine glycan. A helical membrane pass occupies residues 61–83 (TITYLVIIAMTVVGNTLVVVAVF). At 84 to 93 (SYRPLKKVQN) the chain is on the cytoplasmic side. Residues 94-115 (YFLVSLAASDLAVAIFVMPLHV) form a helical membrane-spanning segment. At 116–133 (VTFLAGGKWLLGVTVCQF) the chain is on the extracellular side. Cysteine 131 and cysteine 209 are disulfide-bonded. The chain crosses the membrane as a helical span at residues 134–154 (FTTADILLCTSSILNLCAIAL). At 155–174 (DRYWAIHNPINYAQKRTTKF) the chain is on the cytoplasmic side. Residues 175–197 (VCIVIVIVWILSMLISVPPIIGW) form a helical membrane-spanning segment. Over 198 to 221 (NNWQENMMEDSCGLSTEKAFVVFS) the chain is Extracellular. Residues 222–243 (AAGSFFLPLLVMVVVYVKIFIS) form a helical membrane-spanning segment. Residues 244–370 (ARQRIRTNRG…VAKEKRAAKT (127 aa)) are Cytoplasmic-facing. A helical transmembrane segment spans residues 371-392 (IAVIIFVFSFCWLPFFVAYVIR). At 393–407 (PFCETCKLHAKVEQA) the chain is on the extracellular side. The helical transmembrane segment at 408–428 (FTWLGYINSSLNPFLYGILNL) threads the bilayer. The Cytoplasmic portion of the chain corresponds to 429–455 (EFRRAFKKILCPKAVLEQRRRRMSAQP).

This sequence belongs to the G-protein coupled receptor 1 family. In terms of tissue distribution, the different isoforms are expressed in specific, but overlapping sets of sensory, inter- and motor neurons, including AIY, AIZ and RIA interneurons. They are also expressed in pharyngeal cells, head muscles and excretory gland cells.

The protein resides in the cell membrane. G-protein coupled receptor for tyramine, a known neurotransmitter and neuromodulator and direct precursor of octopamine. The rank order of potency is tyramine &gt; octopamine &gt; dopamine &gt; serotonin &gt; epinephrine = norepinephrine. The chain is Tyramine receptor Ser-2 (ser-2) from Caenorhabditis elegans.